The following is a 126-amino-acid chain: Translation initiation factor 5A (126 aa).

Lys-36 carries the post-translational modification Hypusine.

The protein belongs to the eIF-5A family.

Its subcellular location is the cytoplasm. In terms of biological role, functions by promoting the formation of the first peptide bond. The sequence is that of Translation initiation factor 5A from Haloarcula marismortui (strain ATCC 43049 / DSM 3752 / JCM 8966 / VKM B-1809) (Halobacterium marismortui).